The primary structure comprises 91 residues: Small ribosomal subunit protein bS20 (91 aa).

It belongs to the bacterial ribosomal protein bS20 family.

In terms of biological role, binds directly to 16S ribosomal RNA. In Wolinella succinogenes (strain ATCC 29543 / DSM 1740 / CCUG 13145 / JCM 31913 / LMG 7466 / NCTC 11488 / FDC 602W) (Vibrio succinogenes), this protein is Small ribosomal subunit protein bS20.